Reading from the N-terminus, the 74-residue chain is Putative membrane protein insertion efficiency factor (74 aa).

The protein belongs to the UPF0161 family.

It is found in the cell inner membrane. Its function is as follows. Could be involved in insertion of integral membrane proteins into the membrane. This chain is Putative membrane protein insertion efficiency factor, found in Syntrophus aciditrophicus (strain SB).